The primary structure comprises 705 residues: uncharacterized protein (705 aa).

Catalysis depends on charge relay system residues S554 and H676.

It belongs to the peptidase S9A family.

This is an uncharacterized protein from Sinorhizobium fredii (strain NBRC 101917 / NGR234).